A 24-amino-acid polypeptide reads, in one-letter code: Ascaphin-6 (24 aa).

As to expression, expressed by the skin glands.

Its subcellular location is the secreted. In terms of biological role, antimicrobial peptide that shows higher potency against Gram-negative bacteria than against Gram-positive bacteria. Has a very week hemolytic activity. The sequence is that of Ascaphin-6 from Ascaphus truei (Coastal tailed frog).